Consider the following 177-residue polypeptide: Glia associated membrane protein glam-1 (177 aa).

3 consecutive transmembrane segments (helical) span residues 19–39, 42–62, and 76–96; these read PLVV…FWMS, FGMA…LFGA, and VTFA…VVFA.

Its subcellular location is the membrane. The protein is Glia associated membrane protein glam-1 of Caenorhabditis elegans.